The sequence spans 610 residues: Probable methyltransferase PMT22 (610 aa).

The Cytoplasmic segment spans residues 1 to 10; the sequence is MIKNIFQSRK. A helical; Signal-anchor for type II membrane protein transmembrane segment spans residues 11-31; sequence LSGLCVLSILLVSVTILLLTN. The Lumenal portion of the chain corresponds to 32–610; that stretch reads DTIDLFPYLS…LVGLKSSWRP (579 aa). The segment covering 56 to 69 has biased composition (low complexity); it reads STPISSPTNDSSPP. The tract at residues 56–81 is disordered; sequence STPISSPTNDSSPPLESPVNQTRVDD. N-linked (GlcNAc...) asparagine glycans are attached at residues asparagine 64, asparagine 75, asparagine 100, asparagine 400, asparagine 469, and asparagine 546.

Belongs to the methyltransferase superfamily.

It is found in the endoplasmic reticulum membrane. This chain is Probable methyltransferase PMT22, found in Arabidopsis thaliana (Mouse-ear cress).